The primary structure comprises 122 residues: Ribosomal protein eL22-like (122 aa).

Phosphoserine is present on residues serine 112, serine 118, and serine 120.

It belongs to the eukaryotic ribosomal protein eL22 family.

The sequence is that of Ribosomal protein eL22-like (RPL22L1) from Bos taurus (Bovine).